We begin with the raw amino-acid sequence, 383 residues long: LIM/homeobox protein Lhx3 (383 aa).

LIM zinc-binding domains lie at 14–73 (PLCA…RFGT) and 73–136 (TKCA…AKQR). Threonine 48 bears the Phosphothreonine mark. Serine 56 bears the Phosphoserine mark. A DNA-binding region (homeobox) is located at residues 142–201 (AKRPRTTITAKQLETLKSAYNTSPKPARHVREQLSSETGLDMRVVQVWFQNRRAKEKRLK). Residues 197 to 383 (EKRLKKDAGR…WLDEVDHAQF (187 aa)) form a disordered region. Tyrosine 212 is modified (phosphotyrosine). Serine 223 carries the post-translational modification Phosphoserine. The segment covering 307-334 (PAALQSLPGPQPLLSSLVYPEAGLGLVP) has biased composition (low complexity). Pro residues predominate over residues 335 to 344 (AGPPGGPPPM).

As to quaternary structure, interacts with POU1F1. At neuronal promoters, interacts with LDB1, in motor neurons LDB1 is displaced by ISL1 and a ternary complex is formed in which ISL1 contacts both LHX3 and LDB1; allosteric structural changes in the DNA binding domain of LHX3, induced by the ISL1-LHX3 interaction, may explain differences in sequence specificity of the different complexes. Interacts with LDB2. May interact with CITED2/MRG1.

The protein localises to the nucleus. In terms of biological role, transcription factor. Recognizes and binds to the consensus sequence motif 5'-AATTAATTA-3' in the regulatory elements of target genes, such as glycoprotein hormones alpha chain CGA and visual system homeobox CHX10, positively modulating transcription; transcription can be co-activated by LDB2. Synergistically enhances transcription from the prolactin promoter in cooperation with POU1F1/Pit-1. Required for the establishment of the specialized cells of the pituitary gland and the nervous system. Involved in the development of interneurons and motor neurons in cooperation with LDB1 and ISL1. The chain is LIM/homeobox protein Lhx3 (LHX3) from Sus scrofa (Pig).